The primary structure comprises 358 residues: Stearoyl-CoA desaturase 2 (358 aa).

The Cytoplasmic segment spans residues 1-71; the sequence is MPAHILQEIS…EGPPPKLEYV (71 aa). The segment at 14-43 is disordered; that stretch reads SATTTITAPPSGGQQNGGEKFEKNPHHWGA. A compositionally biased stretch (basic and acidic residues) spans 32 to 43; it reads EKFEKNPHHWGA. Residues 72-92 traverse the membrane as a helical segment; that stretch reads WRNIVLMALLHIGALYGITLV. Asparagine 74 is a substrate binding site. Residues 93-96 are Lumenal-facing; that stretch reads PSCK. The helical transmembrane segment at 97-117 threads the bilayer; the sequence is VYTCLFAYLYYVISALGITAG. Residues 118–216 are Cytoplasmic-facing; the sequence is AHRLWSHRTY…EKLVMFQRRY (99 aa). Fe cation-binding residues include histidine 119 and histidine 124. The short motif at 119-124 is the Histidine box-1 element; the sequence is HRLWSH. 3 residues coordinate substrate: asparagine 147, arginine 154, and aspartate 155. 3 residues coordinate Fe cation: histidine 156, histidine 159, and histidine 160. Positions 156–160 match the Histidine box-2 motif; it reads HRAHH. 2 residues coordinate substrate: arginine 187 and lysine 188. A helical membrane pass occupies residues 217 to 236; it reads YKPGLLLMCFILPTLVPWYC. At 237–240 the chain is on the lumenal side; it reads WGET. Residues 241–262 traverse the membrane as a helical segment; the sequence is FVNSLCVSTFLRYAVVLNATWL. Position 261 (tryptophan 261) interacts with substrate. Topologically, residues 263-358 are cytoplasmic; sequence VNSAAHLYGY…RTGEESCKSG (96 aa). Histidine 268, histidine 297, histidine 300, and histidine 301 together coordinate Fe cation. The Histidine box-3 motif lies at 297 to 301; it reads HNYHH.

It belongs to the fatty acid desaturase type 1 family. Fe(2+) is required as a cofactor. As to expression, detected in brain and adipose tissue, and at much lower levels in testis. Detected in liver when rats are kept on a fat-free diet, but not when their food contains unsaturated fatty acids.

It localises to the endoplasmic reticulum membrane. The protein localises to the microsome membrane. It catalyses the reaction octadecanoyl-CoA + 2 Fe(II)-[cytochrome b5] + O2 + 2 H(+) = (9Z)-octadecenoyl-CoA + 2 Fe(III)-[cytochrome b5] + 2 H2O. The catalysed reaction is hexadecanoyl-CoA + 2 Fe(II)-[cytochrome b5] + O2 + 2 H(+) = (9Z)-hexadecenoyl-CoA + 2 Fe(III)-[cytochrome b5] + 2 H2O. Stearoyl-CoA desaturase that utilizes O(2) and electrons from reduced cytochrome b5 to introduce the first double bond into saturated fatty acyl-CoA substrates. Catalyzes the insertion of a cis double bond at the delta-9 position into fatty acyl-CoA substrates including palmitoyl-CoA and stearoyl-CoA. Gives rise to a mixture of 16:1 and 18:1 unsaturated fatty acids. Contributes to the biosynthesis of membrane phospholipids, cholesterol esters and triglycerides, especially during embryonic development and in neonates. Important for normal permeability barrier function of the skin in neonates. The sequence is that of Stearoyl-CoA desaturase 2 (Scd2) from Rattus norvegicus (Rat).